A 132-amino-acid polypeptide reads, in one-letter code: Small ribosomal subunit protein uS11 (132 aa).

This sequence belongs to the universal ribosomal protein uS11 family. In terms of assembly, part of the 30S ribosomal subunit.

In terms of biological role, located on the platform of the 30S subunit. The polypeptide is Small ribosomal subunit protein uS11 (Sulfolobus acidocaldarius (strain ATCC 33909 / DSM 639 / JCM 8929 / NBRC 15157 / NCIMB 11770)).